The primary structure comprises 45 residues: Large ribosomal subunit protein bL34 (45 aa).

The segment at 1–27 (MTKRTLGGTSRKRKRVSGFRVRMRTHT) is disordered. The span at 10–27 (SRKRKRVSGFRVRMRTHT) shows a compositional bias: basic residues.

The protein belongs to the bacterial ribosomal protein bL34 family.

The chain is Large ribosomal subunit protein bL34 from Prochlorococcus marinus (strain MIT 9211).